Here is a 56-residue protein sequence, read N- to C-terminus: uncharacterized protein (56 aa).

The helical transmembrane segment at 33-53 (INIIYLAIMKIIMNIIMMIMI) threads the bilayer.

It is found in the host membrane. This is an uncharacterized protein from Bos taurus (Bovine).